The primary structure comprises 43 residues: Cuticle protein CP434 (43 aa).

2 consecutive repeat copies span residues 1 to 18 (ALVG…PVQF) and 25 to 42 (VLTG…NIQL).

In terms of tissue distribution, calcified shell.

The chain is Cuticle protein CP434 from Cancer pagurus (Rock crab).